We begin with the raw amino-acid sequence, 274 residues long: Penicillin-insensitive murein endopeptidase (274 aa).

Positions 1–19 (MKKTAIALLAWFVSSASLA) are cleaved as a signal peptide. 3 disulfides stabilise this stretch: C44/C265, C187/C235, and C216/C223. Zn(2+) is bound by residues H110, H113, D120, D147, H150, and H211. The disordered stretch occupies residues 225-274 (DQPLPPPGDGCGAELQSWFEPPKPGTTKPEKKTPPPLPPSCQALLDEHVL).

Belongs to the peptidase M74 family. In terms of assembly, dimer. It depends on Zn(2+) as a cofactor.

The protein resides in the periplasm. Its function is as follows. Murein endopeptidase that cleaves the D-alanyl-meso-2,6-diamino-pimelyl amide bond that connects peptidoglycan strands. Likely plays a role in the removal of murein from the sacculus. The protein is Penicillin-insensitive murein endopeptidase of Salmonella arizonae (strain ATCC BAA-731 / CDC346-86 / RSK2980).